Consider the following 48-residue polypeptide: Photosystem II reaction center protein K (48 aa).

Positions 1–11 (MFPSTNQEVLA) are excised as a propeptide. The helical transmembrane segment at 23-43 (IVDVLPIIPLLFLLLAFVWQA) threads the bilayer.

Belongs to the PsbK family. PSII is composed of 1 copy each of membrane proteins PsbA, PsbB, PsbC, PsbD, PsbE, PsbF, PsbH, PsbI, PsbJ, PsbK, PsbL, PsbM, PsbT, PsbY, PsbZ, Psb30/Ycf12, at least 3 peripheral proteins of the oxygen-evolving complex and a large number of cofactors. It forms dimeric complexes.

The protein resides in the plastid. The protein localises to the chloroplast thylakoid membrane. Functionally, one of the components of the core complex of photosystem II (PSII). PSII is a light-driven water:plastoquinone oxidoreductase that uses light energy to abstract electrons from H(2)O, generating O(2) and a proton gradient subsequently used for ATP formation. It consists of a core antenna complex that captures photons, and an electron transfer chain that converts photonic excitation into a charge separation. The polypeptide is Photosystem II reaction center protein K (Euglena sanguinea).